A 155-amino-acid polypeptide reads, in one-letter code: SsrA-binding protein (155 aa).

This sequence belongs to the SmpB family.

It is found in the cytoplasm. Required for rescue of stalled ribosomes mediated by trans-translation. Binds to transfer-messenger RNA (tmRNA), required for stable association of tmRNA with ribosomes. tmRNA and SmpB together mimic tRNA shape, replacing the anticodon stem-loop with SmpB. tmRNA is encoded by the ssrA gene; the 2 termini fold to resemble tRNA(Ala) and it encodes a 'tag peptide', a short internal open reading frame. During trans-translation Ala-aminoacylated tmRNA acts like a tRNA, entering the A-site of stalled ribosomes, displacing the stalled mRNA. The ribosome then switches to translate the ORF on the tmRNA; the nascent peptide is terminated with the 'tag peptide' encoded by the tmRNA and targeted for degradation. The ribosome is freed to recommence translation, which seems to be the essential function of trans-translation. This is SsrA-binding protein from Streptococcus equi subsp. zooepidemicus (strain H70).